A 122-amino-acid chain; its full sequence is Large ribosomal subunit protein bL17 (122 aa).

This sequence belongs to the bacterial ribosomal protein bL17 family. In terms of assembly, part of the 50S ribosomal subunit. Contacts protein L32.

The protein is Large ribosomal subunit protein bL17 of Neisseria meningitidis serogroup B (strain ATCC BAA-335 / MC58).